Here is a 192-residue protein sequence, read N- to C-terminus: MDAMEFFRNSSGNWRSQRTTHHLAFRRAETGTSEIFVEALGADDQKIVEICEMHDCDPAKAVGGAFVRWESAMAWDKEDENHEGTTVFALIPDEDNPQQGLLLRERGYAEIVPIAGRYHIDEEEALVLVTEYETMTTIERFWFANPDMRLRTSTVQRFGGFNTATYCTEMRVKEENTVSASPAPAYEQFCGW.

This sequence belongs to the CpcS/CpeS biliprotein lyase family.

Functionally, covalently attaches a chromophore to Cys residue(s) of phycobiliproteins. The chain is Chromophore lyase CpcS/CpeS 2 from Synechocystis sp. (strain ATCC 27184 / PCC 6803 / Kazusa).